Consider the following 727-residue polypeptide: Glycerol-3-phosphate dehydrogenase, mitochondrial (727 aa).

The N-terminal 42 residues, methionine 1–alanine 42, are a transit peptide targeting the mitochondrion. Aspartate 71–glutamate 99 contacts FAD. Position 601 is a phosphotyrosine (tyrosine 601). 2 consecutive EF-hand domains span residues serine 623 to glutamine 658 and methionine 659 to glycine 694. Positions 672, 674, 676, 678, and 683 each coordinate Ca(2+).

Belongs to the FAD-dependent glycerol-3-phosphate dehydrogenase family. It depends on FAD as a cofactor.

The protein localises to the mitochondrion. The catalysed reaction is a quinone + sn-glycerol 3-phosphate = dihydroxyacetone phosphate + a quinol. It participates in polyol metabolism; glycerol degradation via glycerol kinase pathway; glycerone phosphate from sn-glycerol 3-phosphate (aerobic route): step 1/1. Its activity is regulated as follows. Calcium-binding enhance the activity of the enzyme. Its function is as follows. Calcium-responsive mitochondrial glycerol-3-phosphate dehydrogenase which seems to be a key component of the pancreatic beta-cell glucose-sensing device. The polypeptide is Glycerol-3-phosphate dehydrogenase, mitochondrial (GPD2) (Bos taurus (Bovine)).